A 390-amino-acid chain; its full sequence is Protein dimmed (390 aa).

The interval 24–163 is disordered; the sequence is HNNNNYNTDG…RNMRRLESNE (140 aa). 2 stretches are compositionally biased toward polar residues: residues 29-44 and 55-64; these read YNTD…SAEG and RTSQLSNNTY. The N-linked (GlcNAc...) asparagine glycan is linked to Asn61. Positions 69–78 are enriched in low complexity; it reads TDSSSQSDDT. Over residues 79–90 the composition is skewed to gly residues; that stretch reads SGGGGSSNGGGS. Residues 122-141 are compositionally biased toward low complexity; it reads PSTIAPNSTSSNSSNANGNA. Asn128, Asn133, and Asn140 each carry an N-linked (GlcNAc...) asparagine glycan. The span at 151-163 shows a compositional bias: basic and acidic residues; sequence AKERNMRRLESNE. The bHLH domain maps to 156–208; sequence MRRLESNERERMRMHSLNDAFQSLREVIPHVEMERRLSKIETLTLAKNYIINL. Residues Asn207 and Asn237 are each glycosylated (N-linked (GlcNAc...) asparagine). The disordered stretch occupies residues 312–339; the sequence is QQQQASHLPHHQQAMHGHGHLGASIQSQ. The N-linked (GlcNAc...) asparagine glycan is linked to Asn347.

In terms of assembly, forms homodimers via the bHLH domain. These dimers bind the core E-box sequence. Detected in the developing nervous system in the bilateral domains in the cephalic region that later on forms part of the ring gland. Concomitantly expressed in the larval central nervous system (CNS), including the dorsal chain neurons as well as several bilateral clusters of neurons: large, midline protocerebral brain cells (MC), lateral protocerebral brain cells (LC), ventral subesophageal neurons (SE) and lateral abdominal neurons, and the transverse nerves. Outside the CNS, detected in at least three classes of endocrine cells: intrinsic cells of the corpora cardiaca, midgut cells, the Inka cells, lateral Bipolar neurons associated with the segmental transverse nerve, and several peptidergic cells of the enteric nervous system. Expressed only in central and peripheral neuroendocrine secretory cells and neurosecretory neurons but not in sensory or motor neurons.

The protein localises to the cytoplasm. Its function is as follows. Transcription factor that regulates neurosecretory (NS) cell function and neuroendocrine cell fate. Acts as a master regulator of common NS functions such as Phm expression and neuropeptide production. Plays a role as a regulator of peptide-containing large dense-core vesicle (LDCV) production and peptidergic cell differentiation. Controls transcription of FMRFamide in Tv neuronal cells and Fur1 in Ap-let cells (Tvb and dorsal apterous cells). Also required for up-regulation of Phm in Tv and Ap-let cells, and expression of three neuropeptide genes, Ms, FMRFamide and Lk. Influences both regulated and constitutive secretory activity in neuroendocrine cells at embryonic and postembryonic level. Loss of function studies show reduced cellular levels of various neuropeptides and neuropeptide biosynthetic enzymes. The chain is Protein dimmed (dimm) from Drosophila melanogaster (Fruit fly).